The sequence spans 283 residues: Thymidylate synthase (283 aa).

R22 serves as a coordination point for dUMP. C160 serves as the catalytic Nucleophile. Residues 180–183 (RSAD), N191, and 221–223 (HIY) contribute to the dUMP site. D183 is a (6R)-5,10-methylene-5,6,7,8-tetrahydrofolate binding site. A (6R)-5,10-methylene-5,6,7,8-tetrahydrofolate-binding site is contributed by S282.

It belongs to the thymidylate synthase family. Bacterial-type ThyA subfamily. In terms of assembly, homodimer.

Its subcellular location is the cytoplasm. It catalyses the reaction dUMP + (6R)-5,10-methylene-5,6,7,8-tetrahydrofolate = 7,8-dihydrofolate + dTMP. It participates in pyrimidine metabolism; dTTP biosynthesis. In terms of biological role, catalyzes the reductive methylation of 2'-deoxyuridine-5'-monophosphate (dUMP) to 2'-deoxythymidine-5'-monophosphate (dTMP) while utilizing 5,10-methylenetetrahydrofolate (mTHF) as the methyl donor and reductant in the reaction, yielding dihydrofolate (DHF) as a by-product. This enzymatic reaction provides an intracellular de novo source of dTMP, an essential precursor for DNA biosynthesis. This chain is Thymidylate synthase, found in Glaesserella parasuis serovar 5 (strain SH0165) (Haemophilus parasuis).